A 349-amino-acid chain; its full sequence is UPF0284 protein MA_3887 (349 aa).

It belongs to the UPF0284 family.

This chain is UPF0284 protein MA_3887, found in Methanosarcina acetivorans (strain ATCC 35395 / DSM 2834 / JCM 12185 / C2A).